Here is a 330-residue protein sequence, read N- to C-terminus: Protein LEG1 homolog (330 aa).

The first 20 residues, 1 to 20 (MAFLPSWVCVLVGSFSASLA), serve as a signal peptide directing secretion. N-linked (GlcNAc...) asparagine glycans are attached at residues N24 and N69.

This sequence belongs to the LEG1 family. Detected in saliva and in hypomineralized dental enamel (at protein level).

The protein resides in the secreted. Functionally, may be involved in early liver development. The chain is Protein LEG1 homolog from Homo sapiens (Human).